Reading from the N-terminus, the 451-residue chain is MDEDREKHVRAKGSDEVDWISKLPDCLLCEVLLNLPTKDVVKTSVLSRRWRNLWKHVPGLDLDNTDFQEFNTFLSFVDSFLDFNSESFLQKFILKYDCDDEYDPDIFLIGRWINTIVTRKVQHIDVLDDSYGSWEVQLPSSIYTCESLVSLKLCGLTLASPEFVSLPSLKVMDLIITKFADDMGLETLITKCPVLESLTIERSFCDEIEVLRVRSQSLLRFTHVADSDEGVVEDLVVSIDAPKLEYLRLSDHRVASFILNKPGKLVKADIDIVFNLSSVNKFNPDDLPKRTMIRNFLLGISTIKDMIIFSSTLEVIYDFSRCERLPLFRNLSVLCVEFYGYMWEMLPIFLESCPNLKTLVVKSASYQEKGENIILPGPRRFLSSLEYVKIERPLKGEAMEMKLVSYLLENSTILKKLTLCLDDSVKKEDSVILKELLAIPRLSTSSKVVVL.

Positions valine 17 to phenylalanine 70 constitute an F-box domain. LRR repeat units lie at residues aspartate 128–glycine 155, threonine 177–arginine 202, valine 224–aspartate 251, and cysteine 335–serine 363. The FBD domain maps to glycine 370 to leucine 421.

The sequence is that of F-box/LRR-repeat protein 13 (FBL13) from Arabidopsis thaliana (Mouse-ear cress).